Here is a 246-residue protein sequence, read N- to C-terminus: 3-deoxy-manno-octulosonate cytidylyltransferase (246 aa).

The protein belongs to the KdsB family.

The protein localises to the cytoplasm. The enzyme catalyses 3-deoxy-alpha-D-manno-oct-2-ulosonate + CTP = CMP-3-deoxy-beta-D-manno-octulosonate + diphosphate. Its pathway is nucleotide-sugar biosynthesis; CMP-3-deoxy-D-manno-octulosonate biosynthesis; CMP-3-deoxy-D-manno-octulosonate from 3-deoxy-D-manno-octulosonate and CTP: step 1/1. It participates in bacterial outer membrane biogenesis; lipopolysaccharide biosynthesis. Activates KDO (a required 8-carbon sugar) for incorporation into bacterial lipopolysaccharide in Gram-negative bacteria. This is 3-deoxy-manno-octulosonate cytidylyltransferase from Rickettsia africae (strain ESF-5).